The chain runs to 339 residues: Glycerol-3-phosphate dehydrogenase [NAD(P)+] (339 aa).

Serine 15, tyrosine 16, histidine 36, and lysine 110 together coordinate NADPH. Lysine 110, glycine 139, and threonine 141 together coordinate sn-glycerol 3-phosphate. Alanine 143 is a binding site for NADPH. Residues lysine 195, aspartate 248, serine 258, arginine 259, and asparagine 260 each contribute to the sn-glycerol 3-phosphate site. Lysine 195 functions as the Proton acceptor in the catalytic mechanism. Arginine 259 provides a ligand contact to NADPH. NADPH-binding residues include valine 283 and glutamate 285.

It belongs to the NAD-dependent glycerol-3-phosphate dehydrogenase family.

The protein localises to the cytoplasm. It catalyses the reaction sn-glycerol 3-phosphate + NAD(+) = dihydroxyacetone phosphate + NADH + H(+). It carries out the reaction sn-glycerol 3-phosphate + NADP(+) = dihydroxyacetone phosphate + NADPH + H(+). Its pathway is membrane lipid metabolism; glycerophospholipid metabolism. Catalyzes the reduction of the glycolytic intermediate dihydroxyacetone phosphate (DHAP) to sn-glycerol 3-phosphate (G3P), the key precursor for phospholipid synthesis. The chain is Glycerol-3-phosphate dehydrogenase [NAD(P)+] from Serratia proteamaculans (strain 568).